A 213-amino-acid polypeptide reads, in one-letter code: MKFFIDTANLEEIKKANELGILAGVTTNPSLVAKENVPFHDRLREITSIVSGSVSAEVISTDAEGMIEEGEELAKIAPNITIKVPMTKEGLKAVKVFSEKGIKTNVTLIFTANQALLAARAGATYVSPFLGRLDDIGHNGFELISTIADIFNIHGIDTEIIAASIRHPLHVTEAALRGAHIATVPYKVLMQLFNHPLTDQGIEKFLADWNRQK.

K83 (schiff-base intermediate with substrate) is an active-site residue.

It belongs to the transaldolase family. Type 3B subfamily.

Its subcellular location is the cytoplasm. It catalyses the reaction D-sedoheptulose 7-phosphate + D-glyceraldehyde 3-phosphate = D-erythrose 4-phosphate + beta-D-fructose 6-phosphate. The protein operates within carbohydrate degradation; pentose phosphate pathway; D-glyceraldehyde 3-phosphate and beta-D-fructose 6-phosphate from D-ribose 5-phosphate and D-xylulose 5-phosphate (non-oxidative stage): step 2/3. Transaldolase is important for the balance of metabolites in the pentose-phosphate pathway. The polypeptide is Probable transaldolase (Geobacillus sp. (strain WCH70)).